The following is a 139-amino-acid chain: D-ribose pyranase (139 aa).

His-20 serves as the catalytic Proton donor. Residues Asp-28, His-106, and 128–130 contribute to the substrate site; that span reads YAN.

The protein belongs to the RbsD / FucU family. RbsD subfamily. As to quaternary structure, homodecamer.

Its subcellular location is the cytoplasm. The enzyme catalyses beta-D-ribopyranose = beta-D-ribofuranose. The protein operates within carbohydrate metabolism; D-ribose degradation; D-ribose 5-phosphate from beta-D-ribopyranose: step 1/2. Its function is as follows. Catalyzes the interconversion of beta-pyran and beta-furan forms of D-ribose. The polypeptide is D-ribose pyranase (Escherichia coli O6:H1 (strain CFT073 / ATCC 700928 / UPEC)).